Reading from the N-terminus, the 492-residue chain is MRIFLVGMMGSGKSTIGKRISEVLDLQFIDMDEEIERREGRSVRRIFEEDGEEYFRLKEKELLKELVERDNVVVATGGGVVVDPENRELLKKEKTLFLYAPPEVLMERVTTENRPLLSEGKERIREIWEKRKQFYAEFRRIDTSRLNEWETTALVVLEALDEKEISTIEKPHLVKIILGGFKRVRNEELVFTTERVEKIYGRYLPENRLLFPDGEEVKTLEHVSRAYYELIRMDFPRGKTIAGVGGGALTDFTGFVASTFKRGVGLSFYPTTLLAQVDASVGGKNAIDFAGVKNVVGTFRMPDYVIIDPTVTLSMDEGRFEEGVVEAFKMTILSGRGVELFDEPEKIEKRNLRVLSEMVKISVEEKARIVMEDPYDMGLRHALNLGHTLGHVYEMLEGVPHGIAVAWGIEKETMYLYRKGIVPKETMRWIVEKVKQIVPIPVPSVDVEKARNLILNDKKILKGSRVRLPYVKEIGKIEFLEVDPLELLEVVD.

A shikimate kinase region spans residues methionine 1–aspartate 161. ATP is bound at residue glycine 10–threonine 15. A Mg(2+)-binding site is contributed by serine 14. Positions 32, 56, and 78 each coordinate substrate. Arginine 114 contacts ATP. Arginine 131 is a substrate binding site. Residues glutamate 162–aspartate 492 are 3-dehydroquinate synthase.

In the N-terminal section; belongs to the shikimate kinase family. This sequence in the C-terminal section; belongs to the sugar phosphate cyclases superfamily. Dehydroquinate synthase family. The cofactor is Mg(2+). It depends on NAD(+) as a cofactor. Requires a divalent metal cation as cofactor.

The protein resides in the cytoplasm. The catalysed reaction is 7-phospho-2-dehydro-3-deoxy-D-arabino-heptonate = 3-dehydroquinate + phosphate. The enzyme catalyses shikimate + ATP = 3-phosphoshikimate + ADP + H(+). The protein operates within metabolic intermediate biosynthesis; chorismate biosynthesis; chorismate from D-erythrose 4-phosphate and phosphoenolpyruvate: step 2/7. Its pathway is metabolic intermediate biosynthesis; chorismate biosynthesis; chorismate from D-erythrose 4-phosphate and phosphoenolpyruvate: step 5/7. In terms of biological role, catalyzes the specific phosphorylation of the 3-hydroxyl group of shikimic acid using ATP as a cosubstrate. This Thermotoga maritima (strain ATCC 43589 / DSM 3109 / JCM 10099 / NBRC 100826 / MSB8) protein is Bifunctional shikimate kinase/3-dehydroquinate synthase (aroKB).